The chain runs to 1205 residues: Nitric oxide synthase 3 (1205 aa).

Disordered regions lie at residues 1-20 (MGNL…LGLG) and 26-73 (CGKQ…FPRV). The span at 33-47 (SPAPEPSWAPAPATP) shows a compositional bias: pro residues. Cysteine 96 and cysteine 101 together coordinate Zn(2+). The interaction with NOSIP stretch occupies residues 100–489 (RCLGSLVLPR…PDPWKGSAAK (390 aa)). Serine 104 serves as a coordination point for (6R)-L-erythro-5,6,7,8-tetrahydrobiopterin. A Phosphoserine modification is found at serine 116. Cysteine 186 contributes to the heme b binding site. L-arginine-binding residues include glutamine 250, tryptophan 359, tyrosine 360, and glutamate 364. Residue arginine 368 participates in (6R)-L-erythro-5,6,7,8-tetrahydrobiopterin binding. Asparagine 369 contributes to the L-arginine binding site. Residues alanine 449, tryptophan 450, and phenylalanine 463 each contribute to the (6R)-L-erythro-5,6,7,8-tetrahydrobiopterin site. Tyrosine 478 contacts heme b. Threonine 498 carries the phosphothreonine modification. Residues serine 529, glutamate 530, threonine 531, arginine 533, serine 575, and threonine 576 each coordinate FMN. A phosphoserine mark is found at serine 618, serine 636, and serine 641. FMN is bound by residues serine 657, cysteine 664, glutamate 690, and glutamine 694. Arginine 781 provides a ligand contact to NADP(+). Residues 796–850 (LQYQPGDHISPHPPPRSSHRPGQGGPRVAPFSERPLMPRTPPPGGPPPSWVRDPR) form a disordered region. Residue histidine 803 coordinates FAD. Positions 833–844 (PRTPPPGGPPPS) are enriched in pro residues. Positions 939, 941, 942, 957, and 959 each coordinate FAD. Residues threonine 1018, arginine 1051, serine 1080, arginine 1081, lysine 1087, tyrosine 1089, and glutamine 1091 each contribute to the NADP(+) site. Residue threonine 1177 is modified to Phosphothreonine. Serine 1179 and serine 1181 each carry phosphoserine.

This sequence belongs to the NOS family. As to quaternary structure, homodimer. Interacts with NOSIP and NOSTRIN. Interacts with HSP90AB1. Forms a complex with ASL, ASS1 and SLC7A1; the complex regulates cell-autonomous L-arginine synthesis and citrulline recycling while channeling extracellular L-arginine to nitric oxide synthesis pathway. Heme b serves as cofactor. FAD is required as a cofactor. It depends on FMN as a cofactor. Requires (6R)-L-erythro-5,6,7,8-tetrahydrobiopterin as cofactor.

It localises to the membrane. The protein resides in the caveola. Its subcellular location is the cytoplasm. It is found in the cytoskeleton. The protein localises to the golgi apparatus. It localises to the cell membrane. It catalyses the reaction 2 L-arginine + 3 NADPH + 4 O2 + H(+) = 2 L-citrulline + 2 nitric oxide + 3 NADP(+) + 4 H2O. Stimulated by calcium/calmodulin. Inhibited by NOSIP and NOSTRIN. Produces nitric oxide (NO) which is implicated in vascular smooth muscle relaxation through a cGMP-mediated signal transduction pathway. NO mediates vascular endothelial growth factor (VEGF)-induced angiogenesis in coronary vessels and promotes blood clotting through the activation of platelets. The sequence is that of Nitric oxide synthase 3 (NOS3) from Ovis aries (Sheep).